Consider the following 372-residue polypeptide: ATP phosphoribosyltransferase regulatory subunit (372 aa).

The protein belongs to the class-II aminoacyl-tRNA synthetase family. HisZ subfamily. In terms of assembly, heteromultimer composed of HisG and HisZ subunits.

The protein resides in the cytoplasm. Its pathway is amino-acid biosynthesis; L-histidine biosynthesis; L-histidine from 5-phospho-alpha-D-ribose 1-diphosphate: step 1/9. Required for the first step of histidine biosynthesis. May allow the feedback regulation of ATP phosphoribosyltransferase activity by histidine. In Allorhizobium ampelinum (strain ATCC BAA-846 / DSM 112012 / S4) (Agrobacterium vitis (strain S4)), this protein is ATP phosphoribosyltransferase regulatory subunit.